The chain runs to 321 residues: Aspartate carbamoyltransferase catalytic subunit (321 aa).

R65 and T66 together coordinate carbamoyl phosphate. Residue K93 participates in L-aspartate binding. 3 residues coordinate carbamoyl phosphate: R115, H143, and Q146. Positions 176 and 230 each coordinate L-aspartate. Carbamoyl phosphate is bound by residues G271 and P272.

Belongs to the aspartate/ornithine carbamoyltransferase superfamily. ATCase family. Heterododecamer (2C3:3R2) of six catalytic PyrB chains organized as two trimers (C3), and six regulatory PyrI chains organized as three dimers (R2).

The enzyme catalyses carbamoyl phosphate + L-aspartate = N-carbamoyl-L-aspartate + phosphate + H(+). It functions in the pathway pyrimidine metabolism; UMP biosynthesis via de novo pathway; (S)-dihydroorotate from bicarbonate: step 2/3. Its function is as follows. Catalyzes the condensation of carbamoyl phosphate and aspartate to form carbamoyl aspartate and inorganic phosphate, the committed step in the de novo pyrimidine nucleotide biosynthesis pathway. In Bartonella tribocorum (strain CIP 105476 / IBS 506), this protein is Aspartate carbamoyltransferase catalytic subunit.